The sequence spans 248 residues: uncharacterized protein (248 aa).

This is an uncharacterized protein from Streptococcus pyogenes serotype M6 (strain ATCC BAA-946 / MGAS10394).